The primary structure comprises 527 residues: Mitogen-activated protein kinase kinae MKK2 (527 aa).

Disordered stretches follow at residues 1-143 (MHDQ…SAGS) and 156-189 (IGST…DKDG). Residues 107-129 (QQGQSASGGSESSAAHSRSGSFG) are compositionally biased toward low complexity. Positions 134 to 143 (RTSNPTSAGS) are enriched in polar residues. Positions 177–189 (ERSDGGAGMDKDG) are enriched in basic and acidic residues. Residues 227–497 (IVELGGLGEG…PWRMLEHPWM (271 aa)) form the Protein kinase domain. Residues 233–241 (LGEGAGGAV) and Lys-256 each bind ATP.

The protein belongs to the protein kinase superfamily. STE Ser/Thr protein kinase family. MAP kinase kinase subfamily. In terms of assembly, interacts with the adapter protein MST50.

The enzyme catalyses L-seryl-[protein] + ATP = O-phospho-L-seryl-[protein] + ADP + H(+). The catalysed reaction is L-threonyl-[protein] + ATP = O-phospho-L-threonyl-[protein] + ADP + H(+). In terms of biological role, mitogen-activated protein kinase kinase; part of the MCK1-MKK2-MPS1 MAP kinase (MAPK) signal transduction cascade that is essential for appressorium formation, penetration and invasive growth. Beside its role in pathogenesis, the MPS1 cascade is active in conidiation and cellular stress responses. Targets downstream of the the MPS1-MAPK pathway include transcription factors MIG1 and SWI6, as well as GSK1 and MPG1. This chain is Mitogen-activated protein kinase kinae MKK2, found in Pyricularia oryzae (strain 70-15 / ATCC MYA-4617 / FGSC 8958) (Rice blast fungus).